Here is a 103-residue protein sequence, read N- to C-terminus: Nucleoid-associated protein SUN_2278 (103 aa).

This sequence belongs to the YbaB/EbfC family. As to quaternary structure, homodimer.

It is found in the cytoplasm. The protein resides in the nucleoid. Its function is as follows. Binds to DNA and alters its conformation. May be involved in regulation of gene expression, nucleoid organization and DNA protection. The chain is Nucleoid-associated protein SUN_2278 from Sulfurovum sp. (strain NBC37-1).